The primary structure comprises 300 residues: Protoheme IX farnesyltransferase (300 aa).

A run of 9 helical transmembrane segments spans residues 24–44 (VTQLAVFCAVIGMFLATPGMV), 46–66 (WHVLIGGTVGIWLLAGAAFAI), 94–114 (PQILLFSAVLGSVGAWTLYTF), 118–138 (LTMWLTIATFVGYAVIYTLLL), 146–166 (IVIGGASGAMPPALGWAAVTG), 172–192 (AWILVLIIFVWTPPHFWVLAL), 217–237 (LHILLYTVILFAVTLMPFISG), 239–259 (SGAVYLTSAVLLGAVFLAYAW), and 278–298 (IVYLSLLFAALLVDHYARPLL).

The protein belongs to the UbiA prenyltransferase family. Protoheme IX farnesyltransferase subfamily.

The protein resides in the cell inner membrane. The catalysed reaction is heme b + (2E,6E)-farnesyl diphosphate + H2O = Fe(II)-heme o + diphosphate. It functions in the pathway porphyrin-containing compound metabolism; heme O biosynthesis; heme O from protoheme: step 1/1. Converts heme B (protoheme IX) to heme O by substitution of the vinyl group on carbon 2 of heme B porphyrin ring with a hydroxyethyl farnesyl side group. The protein is Protoheme IX farnesyltransferase of Burkholderia cenocepacia (strain HI2424).